Here is a 102-residue protein sequence, read N- to C-terminus: Parathymosin (102 aa).

The disordered stretch occupies residues 1–102 (MSEKSVEAAA…RQKTENGASA (102 aa)). An N-acetylserine modification is found at Ser2. At Ser2 the chain carries Phosphoserine. The residue at position 4 (Lys4) is an N6-acetyllysine. Ser5 and Ser13 each carry phosphoserine. The span at 13-37 (SAKDLKEKKEKVEEKASRKERKKEV) shows a compositional bias: basic and acidic residues. Lys15 carries the post-translational modification N6-acetyllysine. Acidic residues predominate over residues 38 to 76 (VEEEENGAEEEEEETAEDGEEEDEGEEEDEEEEEEDDEG). Thr52 is subject to Phosphothreonine. Lys92 bears the N6-acetyllysine mark.

The protein belongs to the pro/parathymosin family.

Its function is as follows. Parathymosin may mediate immune function by blocking the effect of prothymosin alpha which confers resistance to certain opportunistic infections. In Homo sapiens (Human), this protein is Parathymosin (PTMS).